Reading from the N-terminus, the 307-residue chain is Ribosomal protein uL3 glutamine methyltransferase (307 aa).

It belongs to the protein N5-glutamine methyltransferase family. PrmB subfamily.

The enzyme catalyses L-glutaminyl-[ribosomal protein uL3] + S-adenosyl-L-methionine = N(5)-methyl-L-glutaminyl-[ribosomal protein uL3] + S-adenosyl-L-homocysteine + H(+). Functionally, methylates large ribosomal subunit protein uL3 on a specific glutamine residue. This is Ribosomal protein uL3 glutamine methyltransferase from Burkholderia pseudomallei (strain K96243).